Reading from the N-terminus, the 456-residue chain is Transforming growth factor beta-1-induced transcript 1 protein (456 aa).

M1 is modified (N-acetylmethionine). Positions 1-79 (MEDLDALLSD…ATPPFSSSCG (79 aa)) are disordered. Positions 1–195 (MEDLDALLSD…DTPSPPGPTS (195 aa)) are transcription activation. The interaction with PTK2B/PYK2 stretch occupies residues 1–235 (MEDLDALLSD…CNKPIAGQVV (235 aa)). The LD motif 1 signature appears at 3–15 (DLDALLSDLETTT). T33 is modified (phosphothreonine). At Y55 the chain carries Phosphotyrosine. Residue S63 is modified to Phosphoserine. The segment at 78–131 (CGVLGTGLCELDRLLQELNATQFNITDEIMSQFPSSKETAGEQKEDQSEDKKRP) is interaction with PTK2/FAK1. An LD motif 2 motif is present at residues 87–99 (ELDRLLQELNATQ). The segment at 109-146 (QFPSSKETAGEQKEDQSEDKKRPSPPPSPSPVLPKPSA) is disordered. Basic and acidic residues predominate over residues 116–130 (TAGEQKEDQSEDKKR). S132, S136, S138, S159, S181, and S189 each carry phosphoserine. A compositionally biased stretch (pro residues) spans 132–142 (SPPPSPSPVLP). Positions 152–163 (ELDRLMASLSDF) match the LD motif 3 motif. The interval 166–200 (QNHLPASGPTPPPVPSSMSEDTPSPPGPTSKGSLD) is disordered. The LD motif 4 signature appears at 198–210 (SLDTMLGLLQSDL). 4 consecutive LIM zinc-binding domains span residues 221–280 (GLCG…RFSP), 281–338 (RCGL…QLFA), 339–398 (PRCQ…RRGS), and 399–456 (LCAT…KLFG). Position 398 is a phosphoserine (S398). Phosphothreonine is present on T402.

The protein belongs to the paxillin family. As to quaternary structure, homooligomer. Interacts with CRIP2, HSPB1, ILK, LIMS1, LIMS2, NCK2, NUDT16L1, PAK, PPARG, PTPN12, TCF3, TCF7L2 and VCL. Forms a complex with GIT1 and ARHGEF7. Interacts with AR/androgen receptor in a ligand-dependent manner. Interacts with CSK, LYN, MAPK15, NR3C1, PPARG, PTK2/FAK1, PTK2B/PYK2, SLC6A3, SLC6A4, SMAD3, SRC and talin. Interacts (via LIM zinc-binding domain 2) with CBLC (via RING-type zinc finger); the interaction is direct and enhances CBLC E3 ubiquitin-protein ligase activity. In terms of processing, phosphorylated by gonadotropin-releasing hormone-activated SRC.

The protein localises to the cell junction. The protein resides in the focal adhesion. It localises to the nucleus matrix. It is found in the cytoplasm. Its subcellular location is the cytoskeleton. Functions as a molecular adapter coordinating multiple protein-protein interactions at the focal adhesion complex and in the nucleus. Links various intracellular signaling modules to plasma membrane receptors and regulates the Wnt and TGFB signaling pathways. May also regulate SLC6A3 and SLC6A4 targeting to the plasma membrane hence regulating their activity. In the nucleus, functions as a nuclear receptor coactivator regulating glucocorticoid, androgen, mineralocorticoid and progesterone receptor transcriptional activity. May play a role in the processes of cell growth, proliferation, migration, differentiation and senescence. May have a zinc-dependent DNA-binding activity. In Bos taurus (Bovine), this protein is Transforming growth factor beta-1-induced transcript 1 protein (TGFB1I1).